A 124-amino-acid chain; its full sequence is Histone H2A, embryonic (124 aa).

Residues 1 to 18 (MSGRGKSGKARTKAKTRS) are compositionally biased toward basic residues. Residues 1-21 (MSGRGKSGKARTKAKTRSSRA) are disordered. At Ser-2 the chain carries N-acetylserine. Residue Ser-2 is modified to Phosphoserine. Position 104 is an N5-methylglutamine (Gln-104). Residue Lys-119 forms a Glycyl lysine isopeptide (Lys-Gly) (interchain with G-Cter in ubiquitin) linkage.

It belongs to the histone H2A family. As to quaternary structure, the nucleosome is a histone octamer containing two molecules each of H2A, H2B, H3 and H4 assembled in one H3-H4 heterotetramer and two H2A-H2B heterodimers. The octamer wraps approximately 147 bp of DNA. In terms of processing, monoubiquitination of Lys-119 gives a specific tag for epigenetic transcriptional repression. Phosphorylation of Ser-2 directly represses transcription.

The protein localises to the nucleus. The protein resides in the chromosome. In terms of biological role, core component of nucleosome. Nucleosomes wrap and compact DNA into chromatin, limiting DNA accessibility to the cellular machineries which require DNA as a template. Histones thereby play a central role in transcription regulation, DNA repair, DNA replication and chromosomal stability. DNA accessibility is regulated via a complex set of post-translational modifications of histones, also called histone code, and nucleosome remodeling. The chain is Histone H2A, embryonic from Psammechinus miliaris (Green sea urchin).